The following is a 764-amino-acid chain: 5-methyltetrahydropteroyltriglutamate--homocysteine methyltransferase (764 aa).

5-methyltetrahydropteroyltri-L-glutamate contacts are provided by residues 16–19 (RELK) and K117. L-homocysteine-binding positions include 442 to 444 (IGS) and E495. L-methionine-binding positions include 442–444 (IGS) and E495. 5-methyltetrahydropteroyltri-L-glutamate is bound by residues 526–527 (RC) and W572. D610 is a binding site for L-homocysteine. D610 contacts L-methionine. E616 is a binding site for 5-methyltetrahydropteroyltri-L-glutamate. Zn(2+) contacts are provided by H652, C654, and E676. H705 functions as the Proton donor in the catalytic mechanism. C737 lines the Zn(2+) pocket.

It belongs to the vitamin-B12 independent methionine synthase family. It depends on Zn(2+) as a cofactor.

It catalyses the reaction 5-methyltetrahydropteroyltri-L-glutamate + L-homocysteine = tetrahydropteroyltri-L-glutamate + L-methionine. It participates in amino-acid biosynthesis; L-methionine biosynthesis via de novo pathway; L-methionine from L-homocysteine (MetE route): step 1/1. Catalyzes the transfer of a methyl group from 5-methyltetrahydrofolate to homocysteine resulting in methionine formation. The chain is 5-methyltetrahydropteroyltriglutamate--homocysteine methyltransferase from Bordetella bronchiseptica (strain ATCC BAA-588 / NCTC 13252 / RB50) (Alcaligenes bronchisepticus).